The sequence spans 177 residues: ATP synthase subunit b (177 aa).

A helical membrane pass occupies residues 35–55; the sequence is FFVVLAIFLIVLAVIGTFVVP.

This sequence belongs to the ATPase B chain family. As to quaternary structure, F-type ATPases have 2 components, F(1) - the catalytic core - and F(0) - the membrane proton channel. F(1) has five subunits: alpha(3), beta(3), gamma(1), delta(1), epsilon(1). F(0) has three main subunits: a(1), b(2) and c(10-14). The alpha and beta chains form an alternating ring which encloses part of the gamma chain. F(1) is attached to F(0) by a central stalk formed by the gamma and epsilon chains, while a peripheral stalk is formed by the delta and b chains.

The protein resides in the cell membrane. In terms of biological role, f(1)F(0) ATP synthase produces ATP from ADP in the presence of a proton or sodium gradient. F-type ATPases consist of two structural domains, F(1) containing the extramembraneous catalytic core and F(0) containing the membrane proton channel, linked together by a central stalk and a peripheral stalk. During catalysis, ATP synthesis in the catalytic domain of F(1) is coupled via a rotary mechanism of the central stalk subunits to proton translocation. Its function is as follows. Component of the F(0) channel, it forms part of the peripheral stalk, linking F(1) to F(0). The polypeptide is ATP synthase subunit b (Mycobacteroides abscessus (strain ATCC 19977 / DSM 44196 / CCUG 20993 / CIP 104536 / JCM 13569 / NCTC 13031 / TMC 1543 / L948) (Mycobacterium abscessus)).